A 484-amino-acid polypeptide reads, in one-letter code: MKFIIKLFPEIMIKSESVRKRFVKILTGNIRNVLNKYDDTVAVVKHWDYIEVRSKNIENRILLVELLGRIPGIHHFLEVEEKPFVTLHDIFEQTLSDVATQIENKTFCVRVKRKGKHDFSSLDAERYIGGGLNQAVASAKVQLSKPDVTVRIDIENDKMMLIKARHQGIGGYPIGTQEDVLSLISGGFDSGVSSYMLIRRGSRVHYCFFNLGGATHEIGVKQMAYHIWKRFSGSHKVRFVAINFEQVVAEILEKVDNGQMGVVLKRMMVRAASKVAQRFGIQAIVTGEALGQVSSQTLTNLRLIDEAAESLVLRPLITHDKEQIIAKAKEIGTEDIAKSMPEFCGVISKSPTVKAVKEKIEQEESYFDFSVLESAVQNAQYLDIRQIAEQTKKEVFEVDEITVLSANDVILDIRSPEEVDDKPLEISGQNIILMPFYKLSSHFAELDQSKNYVLYCERGVMSKLQALYLREKGFDNVKVLNKIS.

Positions 61–165 (ILLVELLGRI…NDKMMLIKAR (105 aa)) constitute a THUMP domain. Residues 183 to 184 (LI), Lys265, Gly287, and Gln296 contribute to the ATP site. Cys344 and Cys456 form a disulfide bridge. Positions 404 to 484 (LSANDVILDI…DNVKVLNKIS (81 aa)) constitute a Rhodanese domain. Cys456 functions as the Cysteine persulfide intermediate in the catalytic mechanism.

This sequence belongs to the ThiI family.

The protein localises to the cytoplasm. It catalyses the reaction [ThiI sulfur-carrier protein]-S-sulfanyl-L-cysteine + a uridine in tRNA + 2 reduced [2Fe-2S]-[ferredoxin] + ATP + H(+) = [ThiI sulfur-carrier protein]-L-cysteine + a 4-thiouridine in tRNA + 2 oxidized [2Fe-2S]-[ferredoxin] + AMP + diphosphate. The catalysed reaction is [ThiS sulfur-carrier protein]-C-terminal Gly-Gly-AMP + S-sulfanyl-L-cysteinyl-[cysteine desulfurase] + AH2 = [ThiS sulfur-carrier protein]-C-terminal-Gly-aminoethanethioate + L-cysteinyl-[cysteine desulfurase] + A + AMP + 2 H(+). It participates in cofactor biosynthesis; thiamine diphosphate biosynthesis. Its function is as follows. Catalyzes the ATP-dependent transfer of a sulfur to tRNA to produce 4-thiouridine in position 8 of tRNAs, which functions as a near-UV photosensor. Also catalyzes the transfer of sulfur to the sulfur carrier protein ThiS, forming ThiS-thiocarboxylate. This is a step in the synthesis of thiazole, in the thiamine biosynthesis pathway. The sulfur is donated as persulfide by IscS. The polypeptide is tRNA sulfurtransferase (Histophilus somni (strain 129Pt) (Haemophilus somnus)).